The chain runs to 620 residues: 1-deoxy-D-xylulose-5-phosphate synthase (620 aa).

Residues H80 and 121 to 123 contribute to the thiamine diphosphate site; that span reads GHS. Residue D152 coordinates Mg(2+). Residues 153-154, N181, Y288, and E370 contribute to the thiamine diphosphate site; that span reads GA. N181 serves as a coordination point for Mg(2+).

This sequence belongs to the transketolase family. DXPS subfamily. In terms of assembly, homodimer. The cofactor is Mg(2+). It depends on thiamine diphosphate as a cofactor.

The catalysed reaction is D-glyceraldehyde 3-phosphate + pyruvate + H(+) = 1-deoxy-D-xylulose 5-phosphate + CO2. It functions in the pathway metabolic intermediate biosynthesis; 1-deoxy-D-xylulose 5-phosphate biosynthesis; 1-deoxy-D-xylulose 5-phosphate from D-glyceraldehyde 3-phosphate and pyruvate: step 1/1. Its function is as follows. Catalyzes the acyloin condensation reaction between C atoms 2 and 3 of pyruvate and glyceraldehyde 3-phosphate to yield 1-deoxy-D-xylulose-5-phosphate (DXP). The protein is 1-deoxy-D-xylulose-5-phosphate synthase of Escherichia coli (strain K12 / MC4100 / BW2952).